A 407-amino-acid chain; its full sequence is Protease ElaD (407 aa).

H231 is a catalytic residue. C317 (nucleophile) is an active-site residue.

Belongs to the peptidase C79 family.

Its function is as follows. Protease that can act as an efficient and specific deubiquitinating enzyme in vitro. Does not possess desumoylating and deneddylating activities. The physiological substrate is unknown. The chain is Protease ElaD (elaD) from Escherichia coli O157:H7.